The sequence spans 252 residues: 5'-nucleotidase SurE (252 aa).

4 residues coordinate a divalent metal cation: aspartate 8, aspartate 9, serine 40, and asparagine 92.

Belongs to the SurE nucleotidase family. Requires a divalent metal cation as cofactor.

The protein resides in the cytoplasm. It carries out the reaction a ribonucleoside 5'-phosphate + H2O = a ribonucleoside + phosphate. Functionally, nucleotidase that shows phosphatase activity on nucleoside 5'-monophosphates. This chain is 5'-nucleotidase SurE, found in Mesorhizobium japonicum (strain LMG 29417 / CECT 9101 / MAFF 303099) (Mesorhizobium loti (strain MAFF 303099)).